The sequence spans 291 residues: Ribonuclease Z (291 aa).

Residues His61, His63, Asp65, His66, His133, Asp201, and His257 each coordinate Zn(2+). Catalysis depends on Asp65, which acts as the Proton acceptor.

It belongs to the RNase Z family. Homodimer. Requires Zn(2+) as cofactor.

It catalyses the reaction Endonucleolytic cleavage of RNA, removing extra 3' nucleotides from tRNA precursor, generating 3' termini of tRNAs. A 3'-hydroxy group is left at the tRNA terminus and a 5'-phosphoryl group is left at the trailer molecule.. Zinc phosphodiesterase, which displays some tRNA 3'-processing endonuclease activity. Probably involved in tRNA maturation, by removing a 3'-trailer from precursor tRNA. This chain is Ribonuclease Z, found in Saccharolobus islandicus (strain M.16.27) (Sulfolobus islandicus).